Reading from the N-terminus, the 557-residue chain is Carotenoid-cleaving dioxygenase, mitochondrial (557 aa).

Residues H203, H263, H334, and H551 each coordinate Fe cation.

It belongs to the carotenoid oxygenase family. Fe(2+) serves as cofactor.

The protein resides in the mitochondrion. It catalyses the reaction all-trans-beta-carotene + O2 = beta-ionone + all-trans-10'-apo-beta-carotenal. It carries out the reaction 5-cis-lycopene + O2 = 5-cis-10'-apo-lycopenal + (3E,5E)-6,10-dimethylundeca-3,5,9-trien-2-one. The enzyme catalyses 13-cis-lycopene + O2 = 13-cis-10'-apo-lycopenal + (3E,5E)-6,10-dimethylundeca-3,5,9-trien-2-one. The catalysed reaction is lutein + O2 = (3R,6R)-hydroxy-alpha-ionone + (3R)-3-hydroxy-10'-apo-beta-carotenal. It catalyses the reaction lutein + O2 = (3R,6R)-3-hydroxy-10'-apo-alpha-carotenal + (3R)-hydroxy-beta-ionone. It carries out the reaction all-trans-zeaxanthin + 2 O2 = 4,9-dimethyldodeca-2,4,6,8,10-pentaenedial + 2 (3R)-hydroxy-beta-ionone. The enzyme catalyses all-trans-zeaxanthin + O2 = (3R)-3-hydroxy-10'-apo-beta-carotenal + (3R)-hydroxy-beta-ionone. The catalysed reaction is beta-cryptoxanthin + O2 = all-trans-10'-apo-beta-carotenal + (3R)-hydroxy-beta-ionone. It catalyses the reaction all-trans-10'-apo-beta-carotenal + O2 = beta-ionone + 4,9-dimethyldodeca-2,4,6,8,10-pentaenedial. It carries out the reaction (3R)-3-hydroxy-10'-apo-beta-carotenal + O2 = 4,9-dimethyldodeca-2,4,6,8,10-pentaenedial + (3R)-hydroxy-beta-ionone. The enzyme catalyses (3R,6R)-3-hydroxy-10'-apo-alpha-carotenal + O2 = (3R,6R)-hydroxy-alpha-ionone + 4,9-dimethyldodeca-2,4,6,8,10-pentaenedial. In terms of biological role, broad specificity mitochondrial dioxygenase that mediates the asymmetric oxidative cleavage of carotenoids. Cleaves carotenes (pure hydrocarbon carotenoids) such as all-trans-beta-carotene and lycopene as well as xanthophylls (oxygenated carotenoids) such as zeaxanthin, lutein and beta-cryptoxanthin at both the 9,10 and the 9',10' carbon-carbon double bond. Through its function in carotenoids metabolism regulates oxidative stress and the production of important signaling molecules. The protein is Carotenoid-cleaving dioxygenase, mitochondrial of Pongo abelii (Sumatran orangutan).